The following is a 217-amino-acid chain: Flagellin B1 (217 aa).

A propeptide spanning residues 1–12 is cleaved from the precursor; the sequence is MKVFEFLKGKRG.

The protein belongs to the archaeal flagellin family.

The protein resides in the archaeal flagellum. Flagellin is the subunit protein which polymerizes to form the filaments of archaeal flagella. The protein is Flagellin B1 (flaB1) of Methanocaldococcus jannaschii (strain ATCC 43067 / DSM 2661 / JAL-1 / JCM 10045 / NBRC 100440) (Methanococcus jannaschii).